A 356-amino-acid polypeptide reads, in one-letter code: uncharacterized protein (356 aa).

The next 3 membrane-spanning stretches (helical) occupy residues 258-275, 290-312, and 325-347; these read SALQ…VFYY, PHWL…TEAL, and LVLL…TLFS.

It is found in the cell membrane. This is an uncharacterized protein from Archaeoglobus fulgidus (strain ATCC 49558 / DSM 4304 / JCM 9628 / NBRC 100126 / VC-16).